The following is a 487-amino-acid chain: Mu-like prophage FluMu tail sheath protein (487 aa).

Belongs to the myoviridae tail sheath protein family.

Its function is as follows. Major component of the tail. The chain is Mu-like prophage FluMu tail sheath protein from Haemophilus influenzae (strain ATCC 51907 / DSM 11121 / KW20 / Rd).